We begin with the raw amino-acid sequence, 119 residues long: Large ribosomal subunit protein bL20 (119 aa).

Belongs to the bacterial ribosomal protein bL20 family.

In terms of biological role, binds directly to 23S ribosomal RNA and is necessary for the in vitro assembly process of the 50S ribosomal subunit. It is not involved in the protein synthesizing functions of that subunit. The polypeptide is Large ribosomal subunit protein bL20 (Shouchella clausii (strain KSM-K16) (Alkalihalobacillus clausii)).